The primary structure comprises 389 residues: Succinate--CoA ligase [ADP-forming] subunit beta (389 aa).

The ATP-grasp domain maps to 9-244 (KQLFADYGLP…PSQEDERERR (236 aa)). ATP contacts are provided by residues Lys46, 53–55 (GRG), Glu99, Thr102, and Glu107. The Mg(2+) site is built by Asn199 and Asp213. Substrate-binding positions include Asn264 and 321 to 323 (GIV).

This sequence belongs to the succinate/malate CoA ligase beta subunit family. In terms of assembly, heterotetramer of two alpha and two beta subunits. Mg(2+) serves as cofactor.

It catalyses the reaction succinate + ATP + CoA = succinyl-CoA + ADP + phosphate. It carries out the reaction GTP + succinate + CoA = succinyl-CoA + GDP + phosphate. It functions in the pathway carbohydrate metabolism; tricarboxylic acid cycle; succinate from succinyl-CoA (ligase route): step 1/1. Succinyl-CoA synthetase functions in the citric acid cycle (TCA), coupling the hydrolysis of succinyl-CoA to the synthesis of either ATP or GTP and thus represents the only step of substrate-level phosphorylation in the TCA. The beta subunit provides nucleotide specificity of the enzyme and binds the substrate succinate, while the binding sites for coenzyme A and phosphate are found in the alpha subunit. The chain is Succinate--CoA ligase [ADP-forming] subunit beta from Alcanivorax borkumensis (strain ATCC 700651 / DSM 11573 / NCIMB 13689 / SK2).